The following is a 270-amino-acid chain: tRNA pseudouridine synthase A (270 aa).

D60 (nucleophile) is an active-site residue. Positions 107 to 111 are RNA binding; that stretch reads FHARF. Y118 is a substrate binding site. The segment at 168 to 172 is interaction with tRNA; sequence QCQSR.

Belongs to the tRNA pseudouridine synthase TruA family. As to quaternary structure, homodimer.

The enzyme catalyses uridine(38/39/40) in tRNA = pseudouridine(38/39/40) in tRNA. Its function is as follows. Formation of pseudouridine at positions 38, 39 and 40 in the anticodon stem and loop of transfer RNAs. This is tRNA pseudouridine synthase A from Escherichia coli (strain K12 / DH10B).